The chain runs to 487 residues: Inosine-5'-monophosphate dehydrogenase (487 aa).

CBS domains are found at residues 93–152 and 153–214; these read VVTE…VTAV and MTPK…CKDE. NAD(+) contacts are provided by residues aspartate 248, 248–250, and 298–300; these read DSS and GIG. Positions 300 and 302 each coordinate K(+). Serine 303 lines the IMP pocket. Residue cysteine 305 participates in K(+) binding. The active-site Thioimidate intermediate is cysteine 305. IMP is bound by residues 338 to 340, 361 to 362, and 385 to 389; these read DGG, GS, and YRGMG. Arginine 401 functions as the Proton acceptor in the catalytic mechanism. Glutamate 415 is a binding site for IMP. The K(+) site is built by glutamate 469, serine 470, and histidine 471.

The protein belongs to the IMPDH/GMPR family. Homotetramer. Requires K(+) as cofactor.

The enzyme catalyses IMP + NAD(+) + H2O = XMP + NADH + H(+). It functions in the pathway purine metabolism; XMP biosynthesis via de novo pathway; XMP from IMP: step 1/1. Its activity is regulated as follows. Mycophenolic acid (MPA) is a non-competitive inhibitor that prevents formation of the closed enzyme conformation by binding to the same site as the amobile flap. In contrast, mizoribine monophosphate (MZP) is a competitive inhibitor that induces the closed conformation. MPA is a potent inhibitor of mammalian IMPDHs but a poor inhibitor of the bacterial enzymes. MZP is a more potent inhibitor of bacterial IMPDH. Catalyzes the conversion of inosine 5'-phosphate (IMP) to xanthosine 5'-phosphate (XMP), the first committed and rate-limiting step in the de novo synthesis of guanine nucleotides, and therefore plays an important role in the regulation of cell growth. The polypeptide is Inosine-5'-monophosphate dehydrogenase (Yersinia pestis).